The following is a 379-amino-acid chain: Homoserine O-acetyltransferase (379 aa).

An AB hydrolase-1 domain is found at 52-356; that stretch reads NVVMVLHALT…IRGHDGFLVE (305 aa). Ser157 acts as the Nucleophile in catalysis. Arg227 is a substrate binding site. Residues Asp320 and His350 contribute to the active site. Position 351 (Asp351) interacts with substrate.

It belongs to the AB hydrolase superfamily. MetX family. Homodimer.

It is found in the cytoplasm. It catalyses the reaction L-homoserine + acetyl-CoA = O-acetyl-L-homoserine + CoA. Its pathway is amino-acid biosynthesis; L-methionine biosynthesis via de novo pathway; O-acetyl-L-homoserine from L-homoserine: step 1/1. Its function is as follows. Transfers an acetyl group from acetyl-CoA to L-homoserine, forming acetyl-L-homoserine. The polypeptide is Homoserine O-acetyltransferase (Mycobacterium ulcerans (strain Agy99)).